The sequence spans 70 residues: U2-agatoxin-Ao1n (70 aa).

Positions 1–20 (MRAIISLLLISAMVFYIIAA) are cleaved as a signal peptide. Residues 21–34 (VPEEEGLQLSEDER) constitute a propeptide that is removed on maturation. 3 disulfides stabilise this stretch: C37–C53, C44–C58, and C52–C68. L69 bears the Leucine amide mark.

The protein belongs to the neurotoxin 01 (U2-agtx) family. As to expression, expressed by the venom gland.

It is found in the secreted. In terms of biological role, insect active toxin causing rapid but reversible paralysis in crickets. No activity shown in mammals. Does not show effect on mammalian voltage-gated calcium channels. This chain is U2-agatoxin-Ao1n, found in Agelena orientalis (Funnel-web spider).